The chain runs to 346 residues: Phosphoribosylformylglycinamidine cyclo-ligase (346 aa).

The protein belongs to the AIR synthase family.

It is found in the cytoplasm. It carries out the reaction 2-formamido-N(1)-(5-O-phospho-beta-D-ribosyl)acetamidine + ATP = 5-amino-1-(5-phospho-beta-D-ribosyl)imidazole + ADP + phosphate + H(+). It functions in the pathway purine metabolism; IMP biosynthesis via de novo pathway; 5-amino-1-(5-phospho-D-ribosyl)imidazole from N(2)-formyl-N(1)-(5-phospho-D-ribosyl)glycinamide: step 2/2. The sequence is that of Phosphoribosylformylglycinamidine cyclo-ligase from Shewanella pealeana (strain ATCC 700345 / ANG-SQ1).